We begin with the raw amino-acid sequence, 499 residues long: Protein adenylyltransferase Fic (499 aa).

A helical membrane pass occupies residues Phe-38 to Leu-58. 2 TPR repeats span residues Ala-126–His-159 and Pro-160–His-194. The Inhibitory (S/T)XXXE(G/N) motif signature appears at Ser-251 to Gly-256. Residues Glu-255 and Val-337–His-340 contribute to the ATP site. The Fido domain occupies Ile-306–Asp-441. His-384 is an active-site residue. ATP is bound by residues Asp-388–Arg-395, Tyr-420–Tyr-421, and Asn-428.

This sequence belongs to the fic family. Homodimer.

Its subcellular location is the membrane. It carries out the reaction L-tyrosyl-[protein] + ATP = O-(5'-adenylyl)-L-tyrosyl-[protein] + diphosphate. The catalysed reaction is L-threonyl-[protein] + ATP = 3-O-(5'-adenylyl)-L-threonyl-[protein] + diphosphate. The enzyme catalyses 3-O-(5'-adenylyl)-L-threonyl-[protein] + H2O = L-threonyl-[protein] + AMP + H(+). The side chain of Glu-255 determines which of the two opposing activities (AMPylase or de-AMPylase) will take place. In response to endoplasmic reticulum stress, mediates de-AMPylase activity. Adenylyltransferase activity is inhibited by the inhibitory helix present at the N-terminus: Glu-255 binds ATP and competes with ATP-binding at Arg-395, thereby preventing adenylyltransferase activity. In unstressed cells, disengagement of Glu-255 promotes adenylyltransferase activity. Activation dissociates ATP-binding from Glu-255, allowing ordered binding of the entire ATP moiety with the alpha-phosphate in an orientation that is productive for accepting an incoming target hydroxyl side chain. Its function is as follows. Protein that can both mediate the addition of adenosine 5'-monophosphate (AMP) to specific residues of target proteins (AMPylation), and the removal of the same modification from target proteins (de-AMPylation), depending on the context. The side chain of Glu-255 determines which of the two opposing activities (AMPylase or de-AMPylase) will take place. Acts as a key regulator of the unfolded protein response (UPR) by mediating AMPylation or de-AMPylation of Hsc70-3/BiP. In unstressed cells, acts as an adenylyltransferase by mediating AMPylation of Hsc70-3/BiP at 'Thr-518', thereby inactivating it. In response to endoplasmic reticulum stress, acts as a phosphodiesterase by mediating removal of ATP (de-AMPylation) from Hsc70-3/BiP at 'Thr-518', leading to restore HSPA5/BiP activity. The polypeptide is Protein adenylyltransferase Fic (Aedes aegypti (Yellowfever mosquito)).